The primary structure comprises 340 residues: Zinc finger protein 367 (340 aa).

A disordered region spans residues 101–140; sequence GAPQSSASVAAVSGGEDEEEASSPDSGHLKDGIRRGRPRA. Residues 127 to 140 are compositionally biased toward basic and acidic residues; it reads GHLKDGIRRGRPRA. C2H2-type zinc fingers lie at residues 157–179 and 185–209; these read IRCN…KRTH and YLCD…QRLH. A disordered region spans residues 280-317; it reads KGKLVQKADQEQQDPLEYLQSDEEDDEKSGAQRRLQEQ. Residues 299 to 332 are a coiled coil; it reads QSDEEDDEKSGAQRRLQEQRERLHGALALIELAN. S300 is subject to Phosphoserine. The segment covering 307–317 has biased composition (basic and acidic residues); sequence KSGAQRRLQEQ.

It belongs to the krueppel C2H2-type zinc-finger protein family. As to expression, expressed in bone marrow and ovary.

Its subcellular location is the nucleus. Transcriptional activator. Isoform 1 may be involved in transcriptional activation of erythroid genes. The polypeptide is Zinc finger protein 367 (Znf367) (Mus musculus (Mouse)).